The following is a 317-amino-acid chain: tRNA dimethylallyltransferase (317 aa).

14 to 21 contributes to the ATP binding site; that stretch reads GPTAVGKT. 16-21 contributes to the substrate binding site; the sequence is TAVGKT. The interval 39–42 is interaction with substrate tRNA; that stretch reads DSMQ.

Belongs to the IPP transferase family. Monomer. Mg(2+) serves as cofactor.

It carries out the reaction adenosine(37) in tRNA + dimethylallyl diphosphate = N(6)-dimethylallyladenosine(37) in tRNA + diphosphate. Functionally, catalyzes the transfer of a dimethylallyl group onto the adenine at position 37 in tRNAs that read codons beginning with uridine, leading to the formation of N6-(dimethylallyl)adenosine (i(6)A). The sequence is that of tRNA dimethylallyltransferase from Bacillus thuringiensis subsp. konkukian (strain 97-27).